A 232-amino-acid polypeptide reads, in one-letter code: 5'-methylthioadenosine/S-adenosylhomocysteine nucleosidase (232 aa).

E12 functions as the Proton acceptor in the catalytic mechanism. Residues G78, V153, and 174-175 (ME) contribute to the substrate site. D198 (proton donor) is an active-site residue.

It belongs to the PNP/UDP phosphorylase family. MtnN subfamily.

The enzyme catalyses S-adenosyl-L-homocysteine + H2O = S-(5-deoxy-D-ribos-5-yl)-L-homocysteine + adenine. It catalyses the reaction S-methyl-5'-thioadenosine + H2O = 5-(methylsulfanyl)-D-ribose + adenine. It carries out the reaction 5'-deoxyadenosine + H2O = 5-deoxy-D-ribose + adenine. It functions in the pathway amino-acid biosynthesis; L-methionine biosynthesis via salvage pathway; S-methyl-5-thio-alpha-D-ribose 1-phosphate from S-methyl-5'-thioadenosine (hydrolase route): step 1/2. Its function is as follows. Catalyzes the irreversible cleavage of the glycosidic bond in both 5'-methylthioadenosine (MTA) and S-adenosylhomocysteine (SAH/AdoHcy) to adenine and the corresponding thioribose, 5'-methylthioribose and S-ribosylhomocysteine, respectively. Also cleaves 5'-deoxyadenosine, a toxic by-product of radical S-adenosylmethionine (SAM) enzymes, into 5-deoxyribose and adenine. In Photobacterium profundum (strain SS9), this protein is 5'-methylthioadenosine/S-adenosylhomocysteine nucleosidase.